The following is a 244-amino-acid chain: rRNA adenine N-6-methyltransferase (244 aa).

S-adenosyl-L-methionine contacts are provided by Asn-11, Ile-13, Gly-38, Glu-59, Asp-84, and Asn-101.

The protein belongs to the class I-like SAM-binding methyltransferase superfamily. rRNA adenine N(6)-methyltransferase family.

It catalyses the reaction adenosine(2085) in 23S rRNA + 2 S-adenosyl-L-methionine = N(6)-dimethyladenosine(2085) in 23S rRNA + 2 S-adenosyl-L-homocysteine + 2 H(+). Its function is as follows. This protein produces a dimethylation of the adenine residue at position 2085 in 23S rRNA, resulting in reduced affinity between ribosomes and macrolide-lincosamide-streptogramin B antibiotics. In Staphylococcus aureus, this protein is rRNA adenine N-6-methyltransferase (ermC).